The sequence spans 132 residues: Phosphoribosyl-AMP cyclohydrolase (132 aa).

Position 82 (Asp82) interacts with Mg(2+). Cys83 is a Zn(2+) binding site. Residues Asp84 and Asp86 each contribute to the Mg(2+) site. 2 residues coordinate Zn(2+): Cys100 and Cys107.

Belongs to the PRA-CH family. In terms of assembly, homodimer. Requires Mg(2+) as cofactor. Zn(2+) serves as cofactor.

It localises to the cytoplasm. The enzyme catalyses 1-(5-phospho-beta-D-ribosyl)-5'-AMP + H2O = 1-(5-phospho-beta-D-ribosyl)-5-[(5-phospho-beta-D-ribosylamino)methylideneamino]imidazole-4-carboxamide. The protein operates within amino-acid biosynthesis; L-histidine biosynthesis; L-histidine from 5-phospho-alpha-D-ribose 1-diphosphate: step 3/9. Catalyzes the hydrolysis of the adenine ring of phosphoribosyl-AMP. This Dechloromonas aromatica (strain RCB) protein is Phosphoribosyl-AMP cyclohydrolase.